Here is a 457-residue protein sequence, read N- to C-terminus: Argininosuccinate lyase (457 aa).

Belongs to the lyase 1 family. Argininosuccinate lyase subfamily.

The protein localises to the cytoplasm. It catalyses the reaction 2-(N(omega)-L-arginino)succinate = fumarate + L-arginine. It functions in the pathway amino-acid biosynthesis; L-arginine biosynthesis; L-arginine from L-ornithine and carbamoyl phosphate: step 3/3. This Haemophilus influenzae (strain ATCC 51907 / DSM 11121 / KW20 / Rd) protein is Argininosuccinate lyase.